A 725-amino-acid chain; its full sequence is Heme/hemopexin utilization protein C (725 aa).

The N-terminal stretch at 1-21 (MRFSKLSLAIATTLVTANALA) is a signal peptide. The region spanning 36 to 147 (DPSRFAYTPE…LGGVVAMRTP (112 aa)) is the TBDR plug domain. Residues 158-725 (KFGVKIRQGY…NAKISAVYSF (568 aa)) enclose the TBDR beta-barrel domain. A TonB C-terminal box motif is present at residues 708 to 725 (SLMEGTGRNAKISAVYSF).

The protein belongs to the TonB-dependent receptor family.

Its subcellular location is the cell outer membrane. Functionally, required for utilization of free heme at low concentrations. The chain is Heme/hemopexin utilization protein C (hxuC) from Haemophilus influenzae.